The following is a 585-amino-acid chain: Voltage-gated potassium channel KCNC1 (585 aa).

Topologically, residues 1 to 190 (MGQGDESERI…EDPYSSRYAR (190 aa)) are cytoplasmic. S44 bears the Phosphoserine mark. The Zn(2+) site is built by H77, C83, C104, and C105. Positions 121 to 147 (SFGGAPLDNSADDADADGPGDSGDGED) are disordered. Phosphoserine occurs at positions 130, 142, 158, and 160. Positions 130–147 (SADDADADGPGDSGDGED) are enriched in acidic residues. A helical transmembrane segment spans residues 191-209 (YVAFASLFFILVSITTFCL). N-linked (GlcNAc...) asparagine glycosylation is found at N220 and N229. Residues 248–267 (IEGVCVVWFTFEFLMRVVFC) traverse the membrane as a helical segment. Residues 268 to 276 (PNKVEFIKN) are Cytoplasmic-facing. A helical membrane pass occupies residues 277–295 (SLNIIDFVAILPFYLEVGL). The chain crosses the membrane as a helical; Voltage-sensor span at residues 309 to 331 (FLRVVRFVRILRIFKLTRHFVGL). The Cytoplasmic segment spans residues 332-344 (RVLGHTLRASTNE). A helical transmembrane segment spans residues 345-366 (FLLLIIFLALGVLIFATMIYYA). K(+)-binding residues include T400, L401, G402, and Y403. Residues 400–405 (TLGYGD) carry the Selectivity filter motif. Residues 415–436 (LVGALCALAGVLTIAMPVPVIV) form a helical membrane-spanning segment. The Cytoplasmic segment spans residues 437–585 (NNFGMYYSLA…YMPTEAVRVT (149 aa)). Position 474 is a phosphoserine (S474). Residue T483 is modified to Phosphothreonine.

The protein belongs to the potassium channel family. C (Shaw) (TC 1.A.1.2) subfamily. Kv3.1/KCNC1 sub-subfamily. In terms of assembly, homotetramer. Homomultimer. Heteromultimer with KCNG3, KCNG4 and KCNV2. Heteromultimer with KCNC2. Heterotetramer with KCNC3. Interacts with the ancillary subunits KCNE1 and KCNE2; the interaction modulates channel activity. N-glycosylated; contains sialylated glycans. As to expression, expressed in brain. Expressed in globus pallidal neurons of the basal ganglia (at protein level). Detected on Purkinje cells in the cerebellum molecular layer (at protein level).

The protein localises to the cell membrane. It is found in the cell projection. Its subcellular location is the axon. The protein resides in the presynaptic cell membrane. The enzyme catalyses K(+)(in) = K(+)(out). Its function is as follows. Voltage-gated potassium channel that opens in response to the voltage difference across the membrane and through which potassium ions pass in accordance with their electrochemical gradient. The mechanism is time-dependent and inactivation is slow. Plays an important role in the rapid repolarization of fast-firing brain neurons. Can form functional homotetrameric channels and heterotetrameric channels that contain variable proportions of KCNC2, and possibly other family members as well. Contributes to fire sustained trains of very brief action potentials at high frequency in pallidal neurons. The polypeptide is Voltage-gated potassium channel KCNC1 (Rattus norvegicus (Rat)).